We begin with the raw amino-acid sequence, 428 residues long: Adenylosuccinate synthetase (428 aa).

GTP-binding positions include 12–18 and 40–42; these read GDEGKGK and GHT. Asp13 functions as the Proton acceptor in the catalytic mechanism. Residues Asp13 and Gly40 each coordinate Mg(2+). IMP contacts are provided by residues 13-16, 38-41, Thr128, Arg142, Gln222, Thr237, and Arg301; these read DEGK and NAGH. The Proton donor role is filled by His41. 297 to 303 is a binding site for substrate; that stretch reads TVTGRSR. GTP contacts are provided by residues Arg303, 329 to 331, and 411 to 413; these read KLD and STS.

This sequence belongs to the adenylosuccinate synthetase family. As to quaternary structure, homodimer. The cofactor is Mg(2+).

The protein resides in the cytoplasm. It catalyses the reaction IMP + L-aspartate + GTP = N(6)-(1,2-dicarboxyethyl)-AMP + GDP + phosphate + 2 H(+). The protein operates within purine metabolism; AMP biosynthesis via de novo pathway; AMP from IMP: step 1/2. Plays an important role in the de novo pathway of purine nucleotide biosynthesis. Catalyzes the first committed step in the biosynthesis of AMP from IMP. The protein is Adenylosuccinate synthetase of Phenylobacterium zucineum (strain HLK1).